A 122-amino-acid polypeptide reads, in one-letter code: Small ribosomal subunit protein uS13 (122 aa).

The disordered stretch occupies residues G94 to K122. The segment covering A106 to K122 has biased composition (basic residues).

Belongs to the universal ribosomal protein uS13 family. As to quaternary structure, part of the 30S ribosomal subunit. Forms a loose heterodimer with protein S19. Forms two bridges to the 50S subunit in the 70S ribosome.

Its function is as follows. Located at the top of the head of the 30S subunit, it contacts several helices of the 16S rRNA. In the 70S ribosome it contacts the 23S rRNA (bridge B1a) and protein L5 of the 50S subunit (bridge B1b), connecting the 2 subunits; these bridges are implicated in subunit movement. Contacts the tRNAs in the A and P-sites. The polypeptide is Small ribosomal subunit protein uS13 (Mycoplasma mobile (strain ATCC 43663 / 163K / NCTC 11711) (Mesomycoplasma mobile)).